Reading from the N-terminus, the 369-residue chain is Maltose/maltodextrin import ATP-binding protein MalK (369 aa).

The ABC transporter domain occupies 4 to 234 (VTLRNVCKSY…PKNRFVAGFI (231 aa)). Residue 36–43 (GPSGCGKS) participates in ATP binding.

This sequence belongs to the ABC transporter superfamily. Maltooligosaccharide importer (TC 3.A.1.1.1) family. The complex is composed of two ATP-binding proteins (MalK), two transmembrane proteins (MalG and MalK) and a solute-binding protein (MalE).

It localises to the cell inner membrane. The catalysed reaction is D-maltose(out) + ATP + H2O = D-maltose(in) + ADP + phosphate + H(+). Functionally, part of the ABC transporter complex MalEFGK involved in maltose/maltodextrin import. Responsible for energy coupling to the transport system. The sequence is that of Maltose/maltodextrin import ATP-binding protein MalK from Aliivibrio fischeri (strain ATCC 700601 / ES114) (Vibrio fischeri).